Here is a 176-residue protein sequence, read N- to C-terminus: NAD(P)H-quinone oxidoreductase subunit 6, chloroplastic (176 aa).

5 helical membrane-spanning segments follow: residues 10–30, 33–53, 60–80, 95–115, and 152–172; these read ILVLFGGFVLLLGGLGVVLLT, IYSAFSLGLVLVCISLFYFLL, VAQLLIYVGAINVLIIFAVMF, IGDGFTLLLCITIPFSLMTTI, and FYLPFELISLILLVSLIGAIT.

It belongs to the complex I subunit 6 family. In terms of assembly, NDH is composed of at least 16 different subunits, 5 of which are encoded in the nucleus.

The protein resides in the plastid. Its subcellular location is the chloroplast thylakoid membrane. The enzyme catalyses a plastoquinone + NADH + (n+1) H(+)(in) = a plastoquinol + NAD(+) + n H(+)(out). It catalyses the reaction a plastoquinone + NADPH + (n+1) H(+)(in) = a plastoquinol + NADP(+) + n H(+)(out). Functionally, NDH shuttles electrons from NAD(P)H:plastoquinone, via FMN and iron-sulfur (Fe-S) centers, to quinones in the photosynthetic chain and possibly in a chloroplast respiratory chain. The immediate electron acceptor for the enzyme in this species is believed to be plastoquinone. Couples the redox reaction to proton translocation, and thus conserves the redox energy in a proton gradient. This is NAD(P)H-quinone oxidoreductase subunit 6, chloroplastic (ndhG) from Saccharum hybrid (Sugarcane).